The following is a 410-amino-acid chain: Argininosuccinate synthase (410 aa).

10 to 18 (AYSGGLDTS) contacts ATP. Tyr-88 and Ser-93 together coordinate L-citrulline. Residue Gly-118 participates in ATP binding. Residues Thr-120, Asn-124, and Asp-125 each contribute to the L-aspartate site. Residue Asn-124 participates in L-citrulline binding. Positions 128, 177, 186, 262, and 274 each coordinate L-citrulline.

It belongs to the argininosuccinate synthase family. Type 1 subfamily. Homotetramer.

The protein localises to the cytoplasm. The catalysed reaction is L-citrulline + L-aspartate + ATP = 2-(N(omega)-L-arginino)succinate + AMP + diphosphate + H(+). The protein operates within amino-acid biosynthesis; L-arginine biosynthesis; L-arginine from L-ornithine and carbamoyl phosphate: step 2/3. This Thermoanaerobacter pseudethanolicus (strain ATCC 33223 / 39E) (Clostridium thermohydrosulfuricum) protein is Argininosuccinate synthase.